The primary structure comprises 165 residues: Phosphopantetheine adenylyltransferase (165 aa).

Ser-9 contributes to the substrate binding site. Residues 9 to 10 and His-17 each bind ATP; that span reads SF. Positions 41, 73, and 87 each coordinate substrate. ATP is bound by residues 88–90, Glu-98, and 122–128; these read GLR and YSFLSSS.

This sequence belongs to the bacterial CoaD family. Homohexamer. Mg(2+) is required as a cofactor.

It localises to the cytoplasm. The enzyme catalyses (R)-4'-phosphopantetheine + ATP + H(+) = 3'-dephospho-CoA + diphosphate. It functions in the pathway cofactor biosynthesis; coenzyme A biosynthesis; CoA from (R)-pantothenate: step 4/5. Its function is as follows. Reversibly transfers an adenylyl group from ATP to 4'-phosphopantetheine, yielding dephospho-CoA (dPCoA) and pyrophosphate. In Acidothermus cellulolyticus (strain ATCC 43068 / DSM 8971 / 11B), this protein is Phosphopantetheine adenylyltransferase.